The primary structure comprises 122 residues: Large ribosomal subunit protein uL18 (122 aa).

This sequence belongs to the universal ribosomal protein uL18 family. In terms of assembly, part of the 50S ribosomal subunit; part of the 5S rRNA/L5/L18/L25 subcomplex. Contacts the 5S and 23S rRNAs.

This is one of the proteins that bind and probably mediate the attachment of the 5S RNA into the large ribosomal subunit, where it forms part of the central protuberance. The chain is Large ribosomal subunit protein uL18 from Desulfitobacterium hafniense (strain Y51).